Consider the following 230-residue polypeptide: Cutinase (230 aa).

Residues 1–16 (MKFFALTTFLAATASA) form the signal peptide. Cys47 and Cys125 are disulfide-bonded. Catalysis depends on Ser136, which acts as the Nucleophile. Cys187 and Cys194 are joined by a disulfide. Residue Asp191 is part of the active site. His204 functions as the Proton donor/acceptor in the catalytic mechanism.

It belongs to the cutinase family. Post-translationally, the 2 disulfide bonds play a critical role in holding the catalytic residues in juxta-position; reduction of the disulfide bridges results in the complete inactivation of the enzyme.

Its subcellular location is the secreted. It catalyses the reaction cutin + H2O = cutin monomers.. Functionally, catalyzes the hydrolysis of complex carboxylic polyesters found in the cell wall of plants. Degrades cutin, a macromolecule that forms the structure of the plant cuticle. Allows pathogenic fungi to penetrate through the cuticular barrier into the host plant during the initial stage of fungal infection. This is Cutinase (CUTA) from Fusarium solani subsp. cucurbitae (Neocosmosporum cucurbitae).